A 210-amino-acid chain; its full sequence is Rho-related GTP-binding protein RhoD (210 aa).

Position 24–31 (24–31) interacts with GTP; the sequence is GDGGCGKT. The Effector region signature appears at 46–54; sequence YTPTVFERY. GTP-binding positions include 71 to 75 and 129 to 132; these read DTAGQ and CKTD. Cysteine methyl ester is present on Cys-207. A lipid anchor (S-geranylgeranyl cysteine) is attached at Cys-207. Residues 208–210 constitute a propeptide, removed in mature form; the sequence is VVT.

It belongs to the small GTPase superfamily. Rho family. In terms of assembly, interacts (in GTP-bound form) with DIAPH2 isoform 3, DAPK3, FILIP1 and WHAMM. Interacts with PAK5. Interacts (independent of GTP-loaded status) with ANKFY1. In terms of tissue distribution, heart, placenta, liver, skeletal muscle, and pancreas and, with weaker intensity, in several other tissues.

The protein localises to the cell membrane. It localises to the early endosome. Functionally, involved in endosome dynamics. May coordinate membrane transport with the function of the cytoskeleton. Involved in the internalization and trafficking of activated tyrosine kinase receptors such as PDGFRB. Participates in the reorganization of actin cytoskeleton; the function seems to involve WHAMM and includes regulation of filopodia formation and actin filament bundling. Can modulate the effect of DAPK3 in reorganization of actin cytoskeleton and focal adhesion dissolution. This chain is Rho-related GTP-binding protein RhoD, found in Homo sapiens (Human).